A 688-amino-acid polypeptide reads, in one-letter code: MQPTRSVRPFKVVSDYSPSGDQPTAIAELAGRVNAGEPDVVLLGATGTGKSATAAWLIEKVQRPTLILAHNKTLAAQLATEFRELMPDNAVEYFVSYYDYYQPEAYVPQTDTFIEKDSSVNAEVERLRHSTTNSLLSRRDVVVVSTVSCIYGLGQPEQYMNAMVALQVGMQINRDTLIRKFVSMQYQRNDVDFSRGNFRVRGDTIEIIPMYEELAIRIEMFGDEIEALYQLHPLTGDVVRKMDAVSVFPGSHYVAETEVMQRAIGTIQQELEERLAVLEREGKLLEAQRLRMRTNFDIEMMQQIGFCSGIENYSRHIDGRDAGEAPHCLLDYFPDDFLVVIDESHVTVPQIGAMFEGDSSRKRTLVEHGFRLPSALDNRPLKWNEFTERVPQTVYMSATPGKYELGMGDGVVEQIIRPTGLIDPAIVVKPTKGQIDDLLEQIRIRVEKDERILVTTLTKKMAEELTDYFAEAGVRVRYLHSDVDTLRRVELLSELRAGVYDVLVGINLLREGLDLPEVSLVAILDADKEGFLRSSTSLIQTIGRAARNVSGEVHMYADVLTDSMKRAIEETDRRREKQVAYNTEHGIDPTPLRKRIADITEILAREGEDTKKMLEGRGGGKRSPTPNLRREGKAAAGANELETIISDLNDQMLQAAGELKFELAARLRDELGDLKRELRQMEKAGHLS.

The region spanning 31–188 is the Helicase ATP-binding domain; it reads GRVNAGEPDV…RKFVSMQYQR (158 aa). Residue 44–51 participates in ATP binding; it reads GATGTGKS. A Beta-hairpin motif is present at residues 97–120; sequence YYDYYQPEAYVPQTDTFIEKDSSV. In terms of domain architecture, Helicase C-terminal spans 434–587; the sequence is QIDDLLEQIR…QVAYNTEHGI (154 aa). The interval 607–632 is disordered; it reads GEDTKKMLEGRGGGKRSPTPNLRREG. One can recognise a UVR domain in the interval 642 to 677; that stretch reads ETIISDLNDQMLQAAGELKFELAARLRDELGDLKRE.

The protein belongs to the UvrB family. In terms of assembly, forms a heterotetramer with UvrA during the search for lesions. Interacts with UvrC in an incision complex.

The protein localises to the cytoplasm. The UvrABC repair system catalyzes the recognition and processing of DNA lesions. A damage recognition complex composed of 2 UvrA and 2 UvrB subunits scans DNA for abnormalities. Upon binding of the UvrA(2)B(2) complex to a putative damaged site, the DNA wraps around one UvrB monomer. DNA wrap is dependent on ATP binding by UvrB and probably causes local melting of the DNA helix, facilitating insertion of UvrB beta-hairpin between the DNA strands. Then UvrB probes one DNA strand for the presence of a lesion. If a lesion is found the UvrA subunits dissociate and the UvrB-DNA preincision complex is formed. This complex is subsequently bound by UvrC and the second UvrB is released. If no lesion is found, the DNA wraps around the other UvrB subunit that will check the other stand for damage. The sequence is that of UvrABC system protein B from Clavibacter sepedonicus (Clavibacter michiganensis subsp. sepedonicus).